The chain runs to 141 residues: uncharacterized protein (141 aa).

The tract at residues 1 to 61 (IRLLHSLTPP…PPPPPPPRRA (61 aa)) is disordered. Pro residues predominate over residues 8–58 (TPPPPPPPPPPPPPPPPPPPPPPPPPPPPPPPPPPPPPPPPPPPPPPPPPP). The H-T-H motif DNA-binding region spans 98-116 (KRLLVAYPVRHFLSAACQF).

This is an uncharacterized protein from Owenia fusiformis (Polychaete worm).